We begin with the raw amino-acid sequence, 451 residues long: Trigger factor (451 aa).

The PPIase FKBP-type domain maps to 173–258 (GDRVTLDFVG…LKKIEWAHLP (86 aa)).

It belongs to the FKBP-type PPIase family. Tig subfamily.

Its subcellular location is the cytoplasm. The enzyme catalyses [protein]-peptidylproline (omega=180) = [protein]-peptidylproline (omega=0). Involved in protein export. Acts as a chaperone by maintaining the newly synthesized protein in an open conformation. Functions as a peptidyl-prolyl cis-trans isomerase. This Cupriavidus pinatubonensis (strain JMP 134 / LMG 1197) (Cupriavidus necator (strain JMP 134)) protein is Trigger factor.